Reading from the N-terminus, the 142-residue chain is Hemoglobin subunit alpha (142 aa).

An N-acetylserine modification is found at Ser-1. Residues 1–142 (SLSDKDKAAV…VALALAERYR (142 aa)) form the Globin domain. Residue His-59 participates in O2 binding. His-88 contacts heme b.

This sequence belongs to the globin family. In terms of assembly, hb1 is a heterotetramer of two alpha chains and two beta chains. HbC is a heterotetramer of two alpha chains and two beta-C chains. As to expression, red blood cells.

Involved in oxygen transport from gills to the various peripheral tissues. The chain is Hemoglobin subunit alpha (hba) from Trematomus bernacchii (Emerald rockcod).